The chain runs to 166 residues: V-type proton ATPase subunit c4 (166 aa).

Residues 1-13 (MASSGFSGDETAP) are Lumenal-facing. The chain crosses the membrane as a helical span at residues 14-34 (FFGFLGAAAALVFSCMGAAYG). Topologically, residues 35-56 (TAKSGVGVASMGVMRPELVMKS) are cytoplasmic. A helical transmembrane segment spans residues 57 to 77 (IVPVVMAGVLGIYGLIIAVII). Residues 78–96 (STGINPKAKSYYLFDGYAH) are Lumenal-facing. Residues 97-118 (LSSGLACGLAGLSAGMAIGIVG) form a helical membrane-spanning segment. At 119–130 (DAGVRANAQQPK) the chain is on the cytoplasmic side. The helical transmembrane segment at 131–156 (LFVGMILILIFAEALALYGLIVGIIL) threads the bilayer. Residues 157 to 166 (SSRAGQSRAE) are Lumenal-facing.

This sequence belongs to the V-ATPase proteolipid subunit family. In terms of assembly, V-ATPase is a heteromultimeric enzyme composed of a peripheral catalytic V1 complex (components A to H) attached to an integral membrane V0 proton pore complex (components: a, c, c'', d and e). The proteolipid components c and c'' are present as a hexameric ring that forms the proton-conducting pore. Interacts with APD2.

The protein resides in the vacuole membrane. Proton-conducting pore forming subunit of the membrane integral V0 complex of vacuolar ATPase. V-ATPase is responsible for acidifying a variety of intracellular compartments in eukaryotic cells. The protein is V-type proton ATPase subunit c4 (VHA-c4) of Arabidopsis thaliana (Mouse-ear cress).